Reading from the N-terminus, the 357-residue chain is Peptide chain release factor 1 (357 aa).

The residue at position 235 (Gln235) is an N5-methylglutamine. Residues 285–305 (KRHNEASAMRSAQVGSGDRSE) are disordered.

Belongs to the prokaryotic/mitochondrial release factor family. Methylated by PrmC. Methylation increases the termination efficiency of RF1.

The protein resides in the cytoplasm. Peptide chain release factor 1 directs the termination of translation in response to the peptide chain termination codons UAG and UAA. In Chlamydia pneumoniae (Chlamydophila pneumoniae), this protein is Peptide chain release factor 1 (prfA).